The sequence spans 221 residues: Putative transmembrane protein ORF25 (221 aa).

The N-terminal stretch at 1 to 23 is a signal peptide; sequence MTLAAKLIVLVYVALCFVNESTS. Asn-19 and Asn-179 each carry an N-linked (GlcNAc...) asparagine; by host glycan. The Extracellular segment spans residues 24–191; it reads QDHSNIYHET…LAKARGVPMS (168 aa). A helical membrane pass occupies residues 192–212; the sequence is VSVISGICAIILVIFPIFITI. At 213–221 the chain is on the cytoplasmic side; that stretch reads ANLRRVYLH.

The protein localises to the host membrane. The protein is Putative transmembrane protein ORF25 of Ostreid herpesvirus 1 (isolate France) (OsHV-1).